The following is a 62-amino-acid chain: Zinc metalloproteinase-disintegrin-like BaG (62 aa).

The 31-residue stretch at Lys24–His54 folds into the Peptidase M12B domain. Residue Asn29 is glycosylated (N-linked (GlcNAc...) asparagine). His50 serves as a coordination point for Zn(2+). Glu51 is a catalytic residue. His54 contacts Zn(2+).

It belongs to the venom metalloproteinase (M12B) family. P-III subfamily. P-IIIc sub-subfamily. As to quaternary structure, dimer. Zn(2+) serves as cofactor. The N-terminus is blocked. Expressed by the venom gland.

Its subcellular location is the secreted. Inhibited by EDTA, and 1,10-phenanthroline. Snake venom Zinc metalloproteinase that inhibits ADP-induced platelet aggregation and inhibits the alpha-5/beta-1 (ITGA5/ITGB1) integrin, a fibronectin receptor. Has caseinolytic activity. Induces the detachment of cells that are bound to fibronectin. This is Zinc metalloproteinase-disintegrin-like BaG from Bothrops alternatus (Urutu).